Reading from the N-terminus, the 875-residue chain is Neurotrypsin (875 aa).

Positions 1-20 (MTLARFALALLFGVLPEVVG) are cleaved as a signal peptide. Asn-26 carries N-linked (GlcNAc...) asparagine glycosylation. The segment at 51-72 (QRHRRTRPPPPLPRFPRPPRAL) is disordered. Over residues 58–71 (PPPPLPRFPRPPRA) the composition is skewed to pro residues. Residues 93-165 (CPAGEPWVSV…GKVDWGYCDC (73 aa)) form the Kringle domain. Intrachain disulfides connect Cys-93–Cys-165, Cys-109–Cys-149, Cys-138–Cys-163, Cys-195–Cys-259, Cys-208–Cys-269, Cys-239–Cys-249, Cys-305–Cys-369, Cys-318–Cys-379, Cys-349–Cys-359, Cys-412–Cys-475, Cys-425–Cys-485, Cys-455–Cys-465, Cys-525–Cys-589, Cys-538–Cys-599, Cys-569–Cys-579, Cys-619–Cys-750, Cys-661–Cys-677, Cys-765–Cys-831, Cys-794–Cys-808, and Cys-821–Cys-850. SRCR domains follow at residues 170-271 (VRLR…MCSF), 280-381 (IRLV…SCTP), 387-487 (IRLA…ACYP), and 500-601 (VRLM…ICDY). Residues 619-630 (CGLRLLHRRQKR) are zymogen activation region. A Peptidase S1 domain is found at 631 to 874 (IIGGKNSLRG…FVPWIKSVTK (244 aa)). Residue His-676 is the Charge relay system of the active site. Asn-683 is a glycosylation site (N-linked (GlcNAc...) asparagine). The active-site Charge relay system is the Asp-726. Ser-825 acts as the Charge relay system in catalysis.

It belongs to the peptidase S1 family.

Its subcellular location is the secreted. In terms of biological role, plays a role in neuronal plasticity and the proteolytic action may subserve structural reorganizations associated with learning and memory operations. The polypeptide is Neurotrypsin (PRSS12) (Saguinus labiatus (Red-chested mustached tamarin)).